A 198-amino-acid chain; its full sequence is Prostamide/prostaglandin F synthase (198 aa).

Tyr-108 carries the post-translational modification Phosphotyrosine.

This sequence belongs to the peroxiredoxin-like PRXL2 family. Prostamide/prostaglandin F synthase subfamily.

The protein resides in the cytoplasm. It localises to the cytosol. The catalysed reaction is prostaglandin H2 + [thioredoxin]-dithiol = prostaglandin F2alpha + [thioredoxin]-disulfide. It catalyses the reaction prostamide F2alpha + [thioredoxin]-disulfide = prostamide H2 + [thioredoxin]-dithiol. Functionally, catalyzes the reduction of prostaglandin-ethanolamide H(2) (prostamide H(2)) to prostamide F(2alpha) with NADPH as proton donor. Also able to reduce prostaglandin H(2) to prostaglandin F(2alpha). The sequence is that of Prostamide/prostaglandin F synthase (PRXL2B) from Pongo abelii (Sumatran orangutan).